A 429-amino-acid chain; its full sequence is Alanine aminotransferase (429 aa).

The L-alanine site is built by glycine 65 and asparagine 204. Lysine 265 bears the N6-(pyridoxal phosphate)lysine mark. Arginine 403 is an L-alanine binding site.

This sequence belongs to the class-I pyridoxal-phosphate-dependent aminotransferase family. In terms of assembly, homodimer. Pyridoxal 5'-phosphate is required as a cofactor.

Its subcellular location is the cytoplasm. The enzyme catalyses L-alanine + 2-oxoglutarate = pyruvate + L-glutamate. This is Alanine aminotransferase (aspC) from Mycobacterium bovis (strain ATCC BAA-935 / AF2122/97).